The primary structure comprises 180 residues: ATP synthase subunit delta (180 aa).

Belongs to the ATPase delta chain family. In terms of assembly, F-type ATPases have 2 components, F(1) - the catalytic core - and F(0) - the membrane proton channel. F(1) has five subunits: alpha(3), beta(3), gamma(1), delta(1), epsilon(1). F(0) has three main subunits: a(1), b(2) and c(10-14). The alpha and beta chains form an alternating ring which encloses part of the gamma chain. F(1) is attached to F(0) by a central stalk formed by the gamma and epsilon chains, while a peripheral stalk is formed by the delta and b chains.

Its subcellular location is the cell membrane. Functionally, f(1)F(0) ATP synthase produces ATP from ADP in the presence of a proton or sodium gradient. F-type ATPases consist of two structural domains, F(1) containing the extramembraneous catalytic core and F(0) containing the membrane proton channel, linked together by a central stalk and a peripheral stalk. During catalysis, ATP synthesis in the catalytic domain of F(1) is coupled via a rotary mechanism of the central stalk subunits to proton translocation. Its function is as follows. This protein is part of the stalk that links CF(0) to CF(1). It either transmits conformational changes from CF(0) to CF(1) or is implicated in proton conduction. This Dehalococcoides mccartyi (strain ATCC BAA-2266 / KCTC 15142 / 195) (Dehalococcoides ethenogenes (strain 195)) protein is ATP synthase subunit delta.